Consider the following 315-residue polypeptide: Olfactory receptor 3A3 (315 aa).

The Extracellular segment spans residues 1–28 (MESEAGTNRTAVAEFMLLGLVQTEEMQS). N-linked (GlcNAc...) asparagine glycosylation is present at asparagine 8. Residues 29-52 (VIFVLLLFAYLVTTGGNLSILAAI) form a helical membrane-spanning segment. At 53–60 (LVEPKLHT) the chain is on the cytoplasmic side. The chain crosses the membrane as a helical span at residues 61–82 (PMYFFLGNLSVLDVGCITVTVP). At 83–103 (AMLGRLLSHKSTISYDACLSQ) the chain is on the extracellular side. Cysteine 100 and cysteine 192 are joined by a disulfide. The chain crosses the membrane as a helical span at residues 104–123 (LFFFHLLAGMDCFLLTAMAY). At 124–143 (DRFLAICRPLTYSTHMNQRV) the chain is on the cytoplasmic side. The helical transmembrane segment at 144 to 161 (QRMLVAVSWTCAFTNALT) threads the bilayer. The Extracellular portion of the chain corresponds to 162–199 (HTIALTTLNFCGPSVINHFYCDLPQLFQLSCSSTQLNE). The helical transmembrane segment at 200–222 (LLLFVAAAVMAVAPLVFISVSYA) threads the bilayer. Over 223–239 (HVVAAVLQIHSAEGRKK) the chain is Cytoplasmic. A helical membrane pass occupies residues 240-262 (AFSTCGSHLTVVGIFYGTGVFSY). Residues 263–275 (MRLGSVESSDKDK) lie on the Extracellular side of the membrane. The helical transmembrane segment at 276–295 (GVGVFMTVINPMLNPLIYSL) threads the bilayer. Topologically, residues 296–315 (RNTDVQGALCQLLVVKRSLT) are cytoplasmic.

This sequence belongs to the G-protein coupled receptor 1 family.

The protein resides in the cell membrane. In terms of biological role, odorant receptor. The chain is Olfactory receptor 3A3 (OR3A3) from Pan troglodytes (Chimpanzee).